The primary structure comprises 158 residues: NAD(P)H-quinone oxidoreductase subunit J, chloroplastic (158 aa).

Belongs to the complex I 30 kDa subunit family. NDH is composed of at least 16 different subunits, 5 of which are encoded in the nucleus.

The protein resides in the plastid. Its subcellular location is the chloroplast thylakoid membrane. The enzyme catalyses a plastoquinone + NADH + (n+1) H(+)(in) = a plastoquinol + NAD(+) + n H(+)(out). The catalysed reaction is a plastoquinone + NADPH + (n+1) H(+)(in) = a plastoquinol + NADP(+) + n H(+)(out). In terms of biological role, NDH shuttles electrons from NAD(P)H:plastoquinone, via FMN and iron-sulfur (Fe-S) centers, to quinones in the photosynthetic chain and possibly in a chloroplast respiratory chain. The immediate electron acceptor for the enzyme in this species is believed to be plastoquinone. Couples the redox reaction to proton translocation, and thus conserves the redox energy in a proton gradient. The sequence is that of NAD(P)H-quinone oxidoreductase subunit J, chloroplastic from Cucumis sativus (Cucumber).